The primary structure comprises 551 residues: Enhancer of mRNA-decapping protein 3 (551 aa).

Residues 1-63 form the Sm domain; that stretch reads MSQFVGFGVQ…LKDLKVLTVA (63 aa). The disordered stretch occupies residues 64 to 92; the sequence is SQSGKRKQQRQQQQQNDYNQNRGEHIDWQ. The DFDF domain occupies 93–129; it reads DDDVSKIKQQEDFDFQRNLGMFNKKDVFAQLKQNDDI. Residues Ser257 and Ser261 each carry the phosphoserine modification. One can recognise a YjeF N-terminal domain in the interval 288–527; that stretch reads VQLLEMESIT…DIGIPQGAYS (240 aa).

This sequence belongs to the EDC3 family. As to quaternary structure, homodimer. Interacts with DCP2.

The protein localises to the cytoplasm. It localises to the P-body. Stimulates decapping of both stable and unstable mRNA during mRNA decay. Does not affect nonsense-mediated mRNA decay. Required for normal P-body assembly. This Saccharomyces cerevisiae (strain ATCC 204508 / S288c) (Baker's yeast) protein is Enhancer of mRNA-decapping protein 3 (EDC3).